Here is a 390-residue protein sequence, read N- to C-terminus: Succinate--CoA ligase [ADP-forming] subunit beta (390 aa).

Residues 9–244 (KEIFRKYGVP…LDEEEPTEVE (236 aa)) form the ATP-grasp domain. ATP contacts are provided by residues lysine 46, 53–55 (GRG), glutamate 99, alanine 102, and glutamate 107. Positions 199 and 213 each coordinate Mg(2+). Substrate-binding positions include asparagine 264 and 321–323 (GIV).

The protein belongs to the succinate/malate CoA ligase beta subunit family. In terms of assembly, heterotetramer of two alpha and two beta subunits. The cofactor is Mg(2+).

The enzyme catalyses succinate + ATP + CoA = succinyl-CoA + ADP + phosphate. It catalyses the reaction GTP + succinate + CoA = succinyl-CoA + GDP + phosphate. The protein operates within carbohydrate metabolism; tricarboxylic acid cycle; succinate from succinyl-CoA (ligase route): step 1/1. Functionally, succinyl-CoA synthetase functions in the citric acid cycle (TCA), coupling the hydrolysis of succinyl-CoA to the synthesis of either ATP or GTP and thus represents the only step of substrate-level phosphorylation in the TCA. The beta subunit provides nucleotide specificity of the enzyme and binds the substrate succinate, while the binding sites for coenzyme A and phosphate are found in the alpha subunit. The chain is Succinate--CoA ligase [ADP-forming] subunit beta from Nautilia profundicola (strain ATCC BAA-1463 / DSM 18972 / AmH).